We begin with the raw amino-acid sequence, 200 residues long: Pyridoxine/pyridoxamine 5'-phosphate oxidase (200 aa).

Residues 48–53 (RMVLLK), 63–64 (YT), Lys-70, and Gln-92 contribute to the FMN site. Substrate is bound at residue Lys-53. Substrate is bound by residues Tyr-110, Arg-114, and Ser-118. Residues 127–128 (QS) and Trp-171 contribute to the FMN site. Substrate is bound at residue 177–179 (RLH). An FMN-binding site is contributed by Arg-181.

This sequence belongs to the pyridoxamine 5'-phosphate oxidase family. As to quaternary structure, homodimer. Requires FMN as cofactor.

The enzyme catalyses pyridoxamine 5'-phosphate + O2 + H2O = pyridoxal 5'-phosphate + H2O2 + NH4(+). The catalysed reaction is pyridoxine 5'-phosphate + O2 = pyridoxal 5'-phosphate + H2O2. Its pathway is cofactor metabolism; pyridoxal 5'-phosphate salvage; pyridoxal 5'-phosphate from pyridoxamine 5'-phosphate: step 1/1. It participates in cofactor metabolism; pyridoxal 5'-phosphate salvage; pyridoxal 5'-phosphate from pyridoxine 5'-phosphate: step 1/1. Catalyzes the oxidation of either pyridoxine 5'-phosphate (PNP) or pyridoxamine 5'-phosphate (PMP) into pyridoxal 5'-phosphate (PLP). The chain is Pyridoxine/pyridoxamine 5'-phosphate oxidase from Cereibacter sphaeroides (strain ATCC 17023 / DSM 158 / JCM 6121 / CCUG 31486 / LMG 2827 / NBRC 12203 / NCIMB 8253 / ATH 2.4.1.) (Rhodobacter sphaeroides).